Consider the following 134-residue polypeptide: Retinol-binding protein 2 (134 aa).

Residues Lys41 and Gln109 each contribute to the all-trans-retinol site.

This sequence belongs to the calycin superfamily. Fatty-acid binding protein (FABP) family.

Its subcellular location is the cytoplasm. In terms of biological role, intracellular transport of retinol. This is Retinol-binding protein 2 (Rbp2) from Rattus norvegicus (Rat).